The following is a 120-amino-acid chain: Cytochrome c2 iso-1 (120 aa).

Q1 carries the pyrrolidone carboxylic acid modification. Heme c is bound by residues C15, C18, H19, and M98.

It belongs to the cytochrome c family. In terms of processing, binds 1 heme c group covalently per subunit.

Its function is as follows. Cytochrome c2 is found mainly in purple, non-sulfur, photosynthetic bacteria where it functions as the electron donor to the oxidized bacteriochlorophyll in the photophosphorylation pathway. However, it may also have a role in the respiratory chain and is found in some non-photosynthetic bacteria. The sequence is that of Cytochrome c2 iso-1 from Rhodospirillum centenum (Rhodocista centenaria).